Consider the following 172-residue polypeptide: 3-hydroxydecanoyl-[acyl-carrier-protein] dehydratase (172 aa).

H71 is an active-site residue.

This sequence belongs to the thioester dehydratase family. FabA subfamily. In terms of assembly, homodimer.

It is found in the cytoplasm. It catalyses the reaction a (3R)-hydroxyacyl-[ACP] = a (2E)-enoyl-[ACP] + H2O. The catalysed reaction is (3R)-hydroxydecanoyl-[ACP] = (2E)-decenoyl-[ACP] + H2O. The enzyme catalyses (2E)-decenoyl-[ACP] = (3Z)-decenoyl-[ACP]. Its pathway is lipid metabolism; fatty acid biosynthesis. Necessary for the introduction of cis unsaturation into fatty acids. Catalyzes the dehydration of (3R)-3-hydroxydecanoyl-ACP to E-(2)-decenoyl-ACP and then its isomerization to Z-(3)-decenoyl-ACP. Can catalyze the dehydratase reaction for beta-hydroxyacyl-ACPs with saturated chain lengths up to 16:0, being most active on intermediate chain length. This is 3-hydroxydecanoyl-[acyl-carrier-protein] dehydratase from Brucella ovis (strain ATCC 25840 / 63/290 / NCTC 10512).